The following is a 100-amino-acid chain: Envelope glycoprotein N (100 aa).

The N-terminal stretch at M1–G27 is a signal peptide. Over D28–T63 the chain is Virion surface. Residues A64–Y84 traverse the membrane as a helical segment. Topologically, residues R85–H100 are intravirion.

This sequence belongs to the herpesviridae glycoprotein N family. As to quaternary structure, interacts (via N-terminus) with gM (via N-terminus). The gM-gN heterodimer forms the gCII complex.

The protein localises to the virion membrane. Its subcellular location is the host membrane. The protein resides in the host Golgi apparatus. It is found in the host trans-Golgi network. Functionally, envelope glycoprotein necessary for proper maturation of gM and modulation of its membrane fusion activity. Also plays a critical role in virion morphogenesis. The protein is Envelope glycoprotein N of Equus caballus (Horse).